Consider the following 613-residue polypeptide: Probable indole-3-acetic acid-amido synthetase GH3.12 (613 aa).

The protein belongs to the IAA-amido conjugating enzyme family. Expressed in roots.

May catalyze the synthesis of indole-3-acetic acid (IAA)-amino acid conjugates, providing a mechanism for the plant to cope with the presence of excess auxin. The sequence is that of Probable indole-3-acetic acid-amido synthetase GH3.12 (GH3.12) from Oryza sativa subsp. japonica (Rice).